Here is a 180-residue protein sequence, read N- to C-terminus: Inosine/xanthosine triphosphatase (180 aa).

A substrate-binding site is contributed by 8 to 13 (TTNPAK). Positions 38 and 68 each coordinate Mg(2+). Residue 68–69 (EA) coordinates substrate.

Belongs to the YjjX NTPase family. In terms of assembly, homodimer. The cofactor is Mg(2+). Requires Mn(2+) as cofactor.

The catalysed reaction is XTP + H2O = XDP + phosphate + H(+). The enzyme catalyses ITP + H2O = IDP + phosphate + H(+). In terms of biological role, phosphatase that hydrolyzes non-canonical purine nucleotides such as XTP and ITP to their respective diphosphate derivatives. Probably excludes non-canonical purines from DNA/RNA precursor pool, thus preventing their incorporation into DNA/RNA and avoiding chromosomal lesions. The polypeptide is Inosine/xanthosine triphosphatase (Yersinia pestis bv. Antiqua (strain Antiqua)).